A 366-amino-acid polypeptide reads, in one-letter code: Spore germination protein GerM (366 aa).

Disordered regions lie at residues threonine 42–glutamine 72 and glutamate 346–phenylalanine 366. Residues lysine 58–lysine 69 show a composition bias toward basic and acidic residues. The segment covering arginine 357–phenylalanine 366 has biased composition (polar residues).

In terms of biological role, unknown. Affects both sporulation and germination. The polypeptide is Spore germination protein GerM (gerM) (Bacillus subtilis (strain 168)).